The primary structure comprises 635 residues: tRNA 5-methylaminomethyl-2-thiouridine biosynthesis bifunctional protein MnmC (635 aa).

Residues 1-231 (MPITPASLSF…KRQMLRGRYL (231 aa)) are tRNA (mnm(5)s(2)U34)-methyltransferase. The tract at residues 249 to 635 (IGAGVAGTSI…RPARTLRGED (387 aa)) is FAD-dependent cmnm(5)s(2)U34 oxidoreductase.

The protein in the N-terminal section; belongs to the methyltransferase superfamily. tRNA (mnm(5)s(2)U34)-methyltransferase family. It in the C-terminal section; belongs to the DAO family. It depends on FAD as a cofactor.

It localises to the cytoplasm. The enzyme catalyses 5-aminomethyl-2-thiouridine(34) in tRNA + S-adenosyl-L-methionine = 5-methylaminomethyl-2-thiouridine(34) in tRNA + S-adenosyl-L-homocysteine + H(+). Catalyzes the last two steps in the biosynthesis of 5-methylaminomethyl-2-thiouridine (mnm(5)s(2)U) at the wobble position (U34) in tRNA. Catalyzes the FAD-dependent demodification of cmnm(5)s(2)U34 to nm(5)s(2)U34, followed by the transfer of a methyl group from S-adenosyl-L-methionine to nm(5)s(2)U34, to form mnm(5)s(2)U34. The protein is tRNA 5-methylaminomethyl-2-thiouridine biosynthesis bifunctional protein MnmC of Azoarcus sp. (strain BH72).